The primary structure comprises 74 residues: High-potential iron-sulfur protein isozyme 2 (74 aa).

[4Fe-4S] cluster-binding residues include Cys36, Cys39, Cys53, and Cys67.

Homodimer.

Specific class of high-redox-potential 4Fe-4S ferredoxins. Functions in anaerobic electron transport in most purple and in some other photosynthetic bacteria and in at least one genus (Paracoccus) of halophilic, denitrifying bacteria. In Ectothiorhodospira mobilis, this protein is High-potential iron-sulfur protein isozyme 2.